A 1042-amino-acid chain; its full sequence is Disintegrin and metalloproteinase domain-containing protein unc-71 (1042 aa).

The signal sequence occupies residues 1–23 (MICASKITMLGLLVMCTLGGVLG). Residues 24–746 (KVDIRQTTAN…NIGTTLETAT (723 aa)) are Extracellular-facing. N-linked (GlcNAc...) asparagine glycans are attached at residues asparagine 103 and asparagine 155. Positions 227–431 (KYVEVALIAD…GNIQCLLNKP (205 aa)) constitute a Peptidase M12B domain. Disulfide bonds link cysteine 338-cysteine 426, cysteine 378-cysteine 410, cysteine 380-cysteine 386, and cysteine 496-cysteine 516. Residues 437–524 (LRECGNGVVD…DCPPDGHLID (88 aa)) enclose the Disintegrin domain. N-linked (GlcNAc...) asparagine glycosylation occurs at asparagine 538. One can recognise an EGF-like domain in the interval 662–699 (SATACPTNNLALLCSGHGHCTTTARCVCFNGWSGVACD). 3 disulfide bridges follow: cysteine 666–cysteine 681, cysteine 675–cysteine 687, and cysteine 689–cysteine 698. Asparagine 703 is a glycosylation site (N-linked (GlcNAc...) asparagine). A helical transmembrane segment spans residues 747–767 (LFAILLGFGVFLLLCLVCLML). The Cytoplasmic portion of the chain corresponds to 768–1042 (CYRRRSVVEI…KLEMTNSMHN (275 aa)). Disordered regions lie at residues 779–809 (KPSD…RKRK), 825–850 (DERD…RRNG), and 980–1028 (HDVG…PSLF). Residues 825–836 (DERDSTSLRSRD) are compositionally biased toward basic and acidic residues. Polar residues predominate over residues 1002-1027 (DSPTLVNGASSSSTSNNYNFRQSPSL).

Its subcellular location is the cell membrane. Involved in the migration of sex myoblasts (progenitors of egg-laying muscles), Q neuroblasts and BDU interneurons during development. Involved in axon branching and guidance of neurons including GABAergic type D motor neurons. Promotes sex myoblast migration and positioning independently of gonad attraction cues. May act downstream of mig-13 in order to promote the guidance, migration and positioning of Q neuroblasts and their descendants along the anteroposterior body axis. Required for coordinated movements. In Caenorhabditis elegans, this protein is Disintegrin and metalloproteinase domain-containing protein unc-71.